Here is a 259-residue protein sequence, read N- to C-terminus: Ditrans,polycis-undecaprenyl-diphosphate synthase ((2E,6E)-farnesyl-diphosphate specific) (259 aa).

Residue aspartate 32 is part of the active site. Aspartate 32 is a Mg(2+) binding site. Substrate contacts are provided by residues 33 to 36, tryptophan 37, arginine 45, histidine 49, and 77 to 79; these read GNGR and STE. Asparagine 80 (proton acceptor) is an active-site residue. Residues tryptophan 81, arginine 83, arginine 203, and 209–211 contribute to the substrate site; that span reads RIS. Residue glutamate 222 participates in Mg(2+) binding.

The protein belongs to the UPP synthase family. In terms of assembly, homodimer. It depends on Mg(2+) as a cofactor.

The catalysed reaction is 8 isopentenyl diphosphate + (2E,6E)-farnesyl diphosphate = di-trans,octa-cis-undecaprenyl diphosphate + 8 diphosphate. Functionally, catalyzes the sequential condensation of isopentenyl diphosphate (IPP) with (2E,6E)-farnesyl diphosphate (E,E-FPP) to yield (2Z,6Z,10Z,14Z,18Z,22Z,26Z,30Z,34E,38E)-undecaprenyl diphosphate (di-trans,octa-cis-UPP). UPP is the precursor of glycosyl carrier lipid in the biosynthesis of bacterial cell wall polysaccharide components such as peptidoglycan and lipopolysaccharide. This is Ditrans,polycis-undecaprenyl-diphosphate synthase ((2E,6E)-farnesyl-diphosphate specific) (uppS) from Lactiplantibacillus plantarum (strain ATCC BAA-793 / NCIMB 8826 / WCFS1) (Lactobacillus plantarum).